A 122-amino-acid chain; its full sequence is Large ribosomal subunit protein uL14 (122 aa).

Belongs to the universal ribosomal protein uL14 family. Part of the 50S ribosomal subunit. Forms a cluster with proteins L3 and L19. In the 70S ribosome, L14 and L19 interact and together make contacts with the 16S rRNA in bridges B5 and B8.

Its function is as follows. Binds to 23S rRNA. Forms part of two intersubunit bridges in the 70S ribosome. The sequence is that of Large ribosomal subunit protein uL14 from Natranaerobius thermophilus (strain ATCC BAA-1301 / DSM 18059 / JW/NM-WN-LF).